A 294-amino-acid polypeptide reads, in one-letter code: uncharacterized protein (294 aa).

This is an uncharacterized protein from Diadromus pulchellus idnoreovirus 1 (DpIRV-1).